A 536-amino-acid polypeptide reads, in one-letter code: Phosphoenolpyruvate carboxykinase (ATP) (536 aa).

Residues Arg-61, Tyr-195, and Lys-201 each coordinate substrate. ATP contacts are provided by residues Lys-201, His-220, and 236-244; that span reads GLSGTGKTT. Mn(2+) contacts are provided by Lys-201 and His-220. Asp-257 contributes to the Mn(2+) binding site. Residues Glu-285, Arg-322, and Thr-447 each coordinate ATP. Arg-322 serves as a coordination point for substrate.

Belongs to the phosphoenolpyruvate carboxykinase (ATP) family. The cofactor is Mn(2+).

The protein resides in the cytoplasm. It carries out the reaction oxaloacetate + ATP = phosphoenolpyruvate + ADP + CO2. The protein operates within carbohydrate biosynthesis; gluconeogenesis. Functionally, involved in the gluconeogenesis. Catalyzes the conversion of oxaloacetate (OAA) to phosphoenolpyruvate (PEP) through direct phosphoryl transfer between the nucleoside triphosphate and OAA. This is Phosphoenolpyruvate carboxykinase (ATP) from Chelativorans sp. (strain BNC1).